Consider the following 232-residue polypeptide: Large ribosomal subunit protein uL1 (232 aa).

Belongs to the universal ribosomal protein uL1 family. Part of the 50S ribosomal subunit.

Binds directly to 23S rRNA. The L1 stalk is quite mobile in the ribosome, and is involved in E site tRNA release. Functionally, protein L1 is also a translational repressor protein, it controls the translation of the L11 operon by binding to its mRNA. The polypeptide is Large ribosomal subunit protein uL1 (Rhizobium meliloti (strain 1021) (Ensifer meliloti)).